The chain runs to 855 residues: Oxysterol-binding protein-related protein 3 (855 aa).

Positions 1 to 32 (MSDEKNLGVSQKLVSPSRSTSSCSSKQGSRQD) are disordered. Phosphoserine occurs at positions 15 and 33. Residues 15–31 (SPSRSTSSCSSKQGSRQ) show a composition bias toward low complexity. The PH domain maps to 50–145 (PPVQKGFLLK…WVSKLRHHRM (96 aa)). The FFAT 1 motif lies at 161–167 (FFSGSSV). Residues serine 199, serine 250, serine 272, serine 277, serine 288, serine 291, serine 340, serine 393, serine 405, and serine 408 each carry the phosphoserine modification. The tract at residues 274 to 293 (PNLSTLDFGEEKSYSDGSEA) is disordered. The segment at 377–396 (DPPAVPKPGDNLAEENSRDE) is disordered. The FFAT 2 motif lies at 450–454 (LSLDN). Residues 468-490 (PVLESSGEARSKRRTSLPAPGPN) form a disordered region.

This sequence belongs to the OSBP family. In terms of assembly, homodimer. Interacts with RRAS. Interacts (phosphorylated form) with VAPA. Interacts with OSBPL6. In terms of processing, phosphorylation is enhanced in vitro by phorbol-12-myristate-13-acetate (PMA), forskolin and calcium ionophore A23187. Phosphorylation seems to be stimulated in conditions of low cell-cell (or cell-matrix) adhesion. In terms of tissue distribution, expressed in spinal ganglia. Expressed in a subset of small lymphocytes (at protein level).

The protein localises to the endoplasmic reticulum membrane. It localises to the cytoplasm. It is found in the cytosol. Its subcellular location is the cell membrane. The protein resides in the cell projection. The protein localises to the filopodium tip. It localises to the nucleus membrane. Its function is as follows. Phosphoinositide-binding protein which associates with both cell and endoplasmic reticulum (ER) membranes. Can bind to the ER membrane protein VAPA and recruit VAPA to plasma membrane sites, thus linking these intracellular compartments. The ORP3-VAPA complex stimulates RRAS signaling which in turn attenuates integrin beta-1 (ITGB1) activation at the cell surface. With VAPA, may regulate ER morphology. Has a role in regulation of the actin cytoskeleton, cell polarity and cell adhesion. Binds to phosphoinositides with preference for PI(3,4)P2 and PI(3,4,5)P3. Also binds 25-hydroxycholesterol and cholesterol. In Mus musculus (Mouse), this protein is Oxysterol-binding protein-related protein 3 (Osbpl3).